The chain runs to 287 residues: GTPase Era (287 aa).

Residues 11 to 174 form the Era-type G domain; it reads RSGFVAVIGR…RSYLASSLPE (164 aa). GTP-binding positions include 19–26 and 66–70; these read GRTNVGKS and DTPGI. Residues 205–273 enclose the KH type-2 domain; sequence LRDELPQALA…PLTLRVKVQR (69 aa).

It belongs to the TRAFAC class TrmE-Era-EngA-EngB-Septin-like GTPase superfamily. Era GTPase family. Monomer.

The protein localises to the cytoplasm. It localises to the cell membrane. In terms of biological role, an essential GTPase that binds both GDP and GTP, with rapid nucleotide exchange. Plays a role in 16S rRNA processing and 30S ribosomal subunit biogenesis and possibly also in cell cycle regulation and energy metabolism. This Acidimicrobium ferrooxidans (strain DSM 10331 / JCM 15462 / NBRC 103882 / ICP) protein is GTPase Era.